The following is a 228-amino-acid chain: Ribulose-phosphate 3-epimerase-like protein 1 (228 aa).

Ser-10 contributes to the substrate binding site. Residues His-35, Asp-37, and His-70 each contribute to the a divalent metal cation site. Asp-37 functions as the Proton acceptor in the catalytic mechanism. Residues His-70, 146–149, 175–177, and 197–198 contribute to the substrate site; these read GFGE, DGG, and GS. Residue Asp-175 participates in a divalent metal cation binding. The Proton donor role is filled by Asp-175.

Belongs to the ribulose-phosphate 3-epimerase family. Homodimer. The cofactor is Fe(2+). Mn(2+) is required as a cofactor. It depends on Zn(2+) as a cofactor. Requires Co(2+) as cofactor.

It carries out the reaction D-ribulose 5-phosphate = D-xylulose 5-phosphate. It functions in the pathway carbohydrate degradation. In terms of biological role, catalyzes the reversible epimerization of D-ribulose 5-phosphate to D-xylulose 5-phosphate. This is Ribulose-phosphate 3-epimerase-like protein 1 (RPEL1) from Homo sapiens (Human).